A 350-amino-acid chain; its full sequence is Mitogen-activated protein kinase HOG1 (350 aa).

In terms of domain architecture, Protein kinase spans 20–299 (YTDLQPVGMG…AAQALAHEYL (280 aa)). ATP-binding positions include 26-34 (VGMGAFGLV) and Lys-49. Catalysis depends on Asp-141, which acts as the Proton acceptor. Residues 171–173 (TGY) carry the TXY motif.

It belongs to the protein kinase superfamily. Ser/Thr protein kinase family. MAP kinase subfamily. HOG1 sub-subfamily. The cofactor is Mg(2+).

The protein localises to the cytoplasm. It is found in the nucleus. The enzyme catalyses L-seryl-[protein] + ATP = O-phospho-L-seryl-[protein] + ADP + H(+). It carries out the reaction L-threonyl-[protein] + ATP = O-phospho-L-threonyl-[protein] + ADP + H(+). In terms of biological role, proline-directed serine/threonine-protein kinase involved in a signal transduction pathway that is activated by changes in the osmolarity of the extracellular environment. Controls osmotic regulation of transcription of target genes. Involved in environmental stress response. Via the downstream MSN2 transcription factor, may play roles in the regulation of growth, conidiation, trap development, fatty acid metabolism and secondary metabolites biosynthesis. The sequence is that of Mitogen-activated protein kinase HOG1 from Arthrobotrys oligospora (strain ATCC 24927 / CBS 115.81 / DSM 1491) (Nematode-trapping fungus).